The following is a 423-amino-acid chain: UPF0229 protein Psyr_4632 (423 aa).

Residues 65-110 (HHGRGGKQTVVHPGNKEFTTGEHIARPQGGGGGKGPGKAGNSGEGM) form a disordered region. Positions 92–107 (QGGGGGKGPGKAGNSG) are enriched in gly residues.

Belongs to the UPF0229 family.

In Pseudomonas syringae pv. syringae (strain B728a), this protein is UPF0229 protein Psyr_4632.